A 404-amino-acid polypeptide reads, in one-letter code: 4-hydroxy-3-methylbut-2-enyl diphosphate reductase (404 aa).

A [4Fe-4S] cluster-binding site is contributed by Cys66. His96 is a binding site for (2E)-4-hydroxy-3-methylbut-2-enyl diphosphate. Residue His96 coordinates dimethylallyl diphosphate. An isopentenyl diphosphate-binding site is contributed by His96. Cys157 is a [4Fe-4S] cluster binding site. Residue His185 participates in (2E)-4-hydroxy-3-methylbut-2-enyl diphosphate binding. His185 is a dimethylallyl diphosphate binding site. Position 185 (His185) interacts with isopentenyl diphosphate. Glu187 (proton donor) is an active-site residue. Thr250 lines the (2E)-4-hydroxy-3-methylbut-2-enyl diphosphate pocket. Cys288 is a binding site for [4Fe-4S] cluster. Residues Ser317, Ser318, Asn319, and Ser380 each coordinate (2E)-4-hydroxy-3-methylbut-2-enyl diphosphate. Residues Ser317, Ser318, Asn319, and Ser380 each contribute to the dimethylallyl diphosphate site. Residues Ser317, Ser318, Asn319, and Ser380 each coordinate isopentenyl diphosphate.

Belongs to the IspH family. The cofactor is [4Fe-4S] cluster.

The enzyme catalyses isopentenyl diphosphate + 2 oxidized [2Fe-2S]-[ferredoxin] + H2O = (2E)-4-hydroxy-3-methylbut-2-enyl diphosphate + 2 reduced [2Fe-2S]-[ferredoxin] + 2 H(+). It carries out the reaction dimethylallyl diphosphate + 2 oxidized [2Fe-2S]-[ferredoxin] + H2O = (2E)-4-hydroxy-3-methylbut-2-enyl diphosphate + 2 reduced [2Fe-2S]-[ferredoxin] + 2 H(+). The protein operates within isoprenoid biosynthesis; dimethylallyl diphosphate biosynthesis; dimethylallyl diphosphate from (2E)-4-hydroxy-3-methylbutenyl diphosphate: step 1/1. It participates in isoprenoid biosynthesis; isopentenyl diphosphate biosynthesis via DXP pathway; isopentenyl diphosphate from 1-deoxy-D-xylulose 5-phosphate: step 6/6. In terms of biological role, catalyzes the conversion of 1-hydroxy-2-methyl-2-(E)-butenyl 4-diphosphate (HMBPP) into a mixture of isopentenyl diphosphate (IPP) and dimethylallyl diphosphate (DMAPP). Acts in the terminal step of the DOXP/MEP pathway for isoprenoid precursor biosynthesis. The protein is 4-hydroxy-3-methylbut-2-enyl diphosphate reductase of Prochlorococcus marinus (strain MIT 9211).